Here is a 343-residue protein sequence, read N- to C-terminus: Holliday junction branch migration complex subunit RuvB (343 aa).

Residues 1–23 are disordered; that stretch reads MSDDFEVVRPEEQAGDEKDRDLR. Residues 1–183 form a large ATPase domain (RuvB-L) region; sequence MSDDFEVVRP…FGIVQRFEFY (183 aa). ATP contacts are provided by residues Leu22, Arg23, Gly64, Lys67, Thr68, Thr69, 130–132, Arg173, Tyr183, and Arg220; that span reads EDY. Thr68 lines the Mg(2+) pocket. The segment at 184 to 254 is small ATPAse domain (RuvB-S); that stretch reads SHEELASIIS…TVAAGLKQLN (71 aa). The tract at residues 257-343 is head domain (RuvB-H); it reads GLGLETYDRQ…LGDGQEGLFD (87 aa). Residues Arg312 and Arg317 each coordinate DNA.

It belongs to the RuvB family. Homohexamer. Forms an RuvA(8)-RuvB(12)-Holliday junction (HJ) complex. HJ DNA is sandwiched between 2 RuvA tetramers; dsDNA enters through RuvA and exits via RuvB. An RuvB hexamer assembles on each DNA strand where it exits the tetramer. Each RuvB hexamer is contacted by two RuvA subunits (via domain III) on 2 adjacent RuvB subunits; this complex drives branch migration. In the full resolvosome a probable DNA-RuvA(4)-RuvB(12)-RuvC(2) complex forms which resolves the HJ.

It is found in the cytoplasm. The enzyme catalyses ATP + H2O = ADP + phosphate + H(+). Its function is as follows. The RuvA-RuvB-RuvC complex processes Holliday junction (HJ) DNA during genetic recombination and DNA repair, while the RuvA-RuvB complex plays an important role in the rescue of blocked DNA replication forks via replication fork reversal (RFR). RuvA specifically binds to HJ cruciform DNA, conferring on it an open structure. The RuvB hexamer acts as an ATP-dependent pump, pulling dsDNA into and through the RuvAB complex. RuvB forms 2 homohexamers on either side of HJ DNA bound by 1 or 2 RuvA tetramers; 4 subunits per hexamer contact DNA at a time. Coordinated motions by a converter formed by DNA-disengaged RuvB subunits stimulates ATP hydrolysis and nucleotide exchange. Immobilization of the converter enables RuvB to convert the ATP-contained energy into a lever motion, pulling 2 nucleotides of DNA out of the RuvA tetramer per ATP hydrolyzed, thus driving DNA branch migration. The RuvB motors rotate together with the DNA substrate, which together with the progressing nucleotide cycle form the mechanistic basis for DNA recombination by continuous HJ branch migration. Branch migration allows RuvC to scan DNA until it finds its consensus sequence, where it cleaves and resolves cruciform DNA. The chain is Holliday junction branch migration complex subunit RuvB from Treponema denticola (strain ATCC 35405 / DSM 14222 / CIP 103919 / JCM 8153 / KCTC 15104).